We begin with the raw amino-acid sequence, 406 residues long: MNKPVAPNSYKTGPDEEGMFGIFGGRFVAETLMPLILELQQAYETAKNDPEFKAELNALSTFYAGRPSKLYYAEGLSKHLGGAKIYFKREDLNHTGSHKINNCLGQILLAKRMGKTRIIAETGAGQHGVASATVAARFGLPCIVYMGATDVERQKPNVFRMKLLGAEVKPVSAGNGTLKDAMNEALRDWVTNVEDTYYLIGTAAGPHPYPELVRDFQSVIGTEARQQILEQEGRLPDVIVAAVGGGSNAIGLFHPFLDDASVKIVGVEAGGRGLEGEEHCASMSAGRPGVLHGNRTYLLQNADGQILEGHSVSAGLDYPGVGPEHSWLKDSGRVDYVPILDNEALDAFQLCTRTEGIIPALESAHAIAQAVKMAPTMGKDKVMIVNLSGRGDKDVHTVGKLLGMDI.

K99 carries the post-translational modification N6-(pyridoxal phosphate)lysine.

It belongs to the TrpB family. Tetramer of two alpha and two beta chains. Pyridoxal 5'-phosphate serves as cofactor.

The enzyme catalyses (1S,2R)-1-C-(indol-3-yl)glycerol 3-phosphate + L-serine = D-glyceraldehyde 3-phosphate + L-tryptophan + H2O. It participates in amino-acid biosynthesis; L-tryptophan biosynthesis; L-tryptophan from chorismate: step 5/5. The beta subunit is responsible for the synthesis of L-tryptophan from indole and L-serine. This Brucella canis (strain ATCC 23365 / NCTC 10854 / RM-666) protein is Tryptophan synthase beta chain.